The sequence spans 147 residues: MFSLNTIAPALGAKRVGKRVARGIGSGFGKTAGRGHKGQKSRSGCKIKVSFEGGQTPLHRRLPKFGFKSRKSIVTQEITLFDLSRIPENVIDLNVLKKYDIVSRKIRFVKIIMSGTFDKPVIIRNLRISKGARDLIKSVGGRIEEGE.

This sequence belongs to the universal ribosomal protein uL15 family. In terms of assembly, part of the 50S ribosomal subunit.

Functionally, binds to the 23S rRNA. The protein is Large ribosomal subunit protein uL15 of Blochmanniella floridana.